We begin with the raw amino-acid sequence, 248 residues long: Functional amyloid sbunit FapE (248 aa).

An N-terminal signal peptide occupies residues 1–20 (MNTSRWLTALCLAASMPAYA).

It belongs to the FapE family. A minor component of purified amyloid fibrils. Fibrils are resistant to boiling in 2% (weight/vol) SDS and require &gt;90% (vol/vol) formic acid to dissolve.

Its subcellular location is the fimbrium. The protein resides in the secreted. Functionally, a minor component of the functional amyloid in this bacterium. Upon overexpression of the endogenous six-gene locus (fapA-fapF) in situ, cells form large clumps during liquid growth, make large amounts of biofilm and produce amyloid fibrils. Expression of the 6 gene operon in E.coli strain BL21(DE3) induces flocculation and biofilm formation with copious extracellular fibrils. The polypeptide is Functional amyloid sbunit FapE (Pseudomonas fluorescens).